The primary structure comprises 289 residues: MYG1 protein CT_386 (289 aa).

Belongs to the MYG1 family.

The polypeptide is MYG1 protein CT_386 (Chlamydia trachomatis serovar D (strain ATCC VR-885 / DSM 19411 / UW-3/Cx)).